Here is a 217-residue protein sequence, read N- to C-terminus: Probable D-methionine transport system permease protein MetI (217 aa).

Residues 13–207 (TLETLYMGFI…LIVMLSQKLG (195 aa)) enclose the ABC transmembrane type-1 domain. Helical transmembrane passes span 20–40 (GFIA…LAFL), 58–78 (VIIN…LLPF), 81–101 (LVVG…VSAI), 143–163 (IPIL…YSAM), and 184–204 (NMIY…MLSQ).

It belongs to the binding-protein-dependent transport system permease family. CysTW subfamily.

It is found in the cell inner membrane. In terms of biological role, part of the binding-protein-dependent transport system for D-methionine. Probably responsible for the translocation of the substrate across the membrane. The protein is Probable D-methionine transport system permease protein MetI (metI) of Pasteurella multocida (strain Pm70).